Consider the following 507-residue polypeptide: Phosphoprotein (507 aa).

Residues 1 to 48 (MAEEQARHVKNGLECIRALKAEPIGSLAIEEAMAAWSEISDNPGQERA) form an interaction with N0 region. Disordered regions lie at residues 41 to 99 (DNPG…PPRN), 134 to 163 (GLDGDSTLSGGDNESENSDVDIGEPDTEGY), 201 to 231 (NNFPKLGKTLNVPPPPDPGRASTSGTPIKKG), and 250 to 273 (GATQCARKSPSEPSGPGAPAGNVP). S86 carries the post-translational modification Phosphoserine. Residues 134 to 145 (GLDGDSTLSGGD) show a composition bias toward low complexity. Acidic residues predominate over residues 146–160 (NESENSDVDIGEPDT). Position 151 is a phosphoserine (S151). Residues 260–270 (SEPSGPGAPAG) show a composition bias toward low complexity. Positions 304 to 376 (GDYYDDELFS…LSSIMIAIPG (73 aa)) are multimerization. 2 interaction with the L polymerase regions span residues 361–377 (STLEGHLSSIMIAIPGL) and 396–410 (PIIGRDSGRALAEVL). Residues 457–507 (GPASRSVIRSIIKSSRLEEDRKRYLMTLLDDIKGANDLAKFHQMLMKIIMK) are x domain (XD). The segment at 459–507 (ASRSVIRSIIKSSRLEEDRKRYLMTLLDDIKGANDLAKFHQMLMKIIMK) is interaction with the nucleocapsid (N-RNA).

It belongs to the morbillivirus P protein family. As to quaternary structure, homotetramer. Interacts (via multimerization domain and XD domain) with polymerase L; this interaction forms the polymerase L-P complex. Interacts (via N-terminus) with N0 (via Ncore); this interaction allows P to chaperon N0 to avoid N polymerization and non-specific RNA binding before encapsidation. Interacts (via C-terminus) with N-RNA template (via Ntail); this interaction maintains the P/L complex anchored to the nucleocapsid template during the sequential transcription. Interacts (via C-terminus) with protein C this interaction allows C to associate with the ribonucleocapsid. In terms of processing, phosphorylation on serines by host CK2 is necessary for the formation of viral factories.

Functionally, essential cofactor of the RNA polymerase L that plays a central role in the transcription and replication by forming the polymerase complex with RNA polymerase L and recruiting L to the genomic N-RNA template for RNA synthesis. Also plays a central role in the encapsidation of nascent RNA chains by forming the encapsidation complex with the nucleocapsid protein N (N-P complex). Acts as a chaperone for newly synthesized free N protein, so-called N0, allowing encapsidation of nascent RNA chains during replication. The nucleoprotein protein N prevents excessive phosphorylation of P, which leads to down-regulation of viral transcription/ replication. Participates, together with N, in the formation of viral factories (viroplasms), which are large inclusions in the host cytoplasm where replication takes place. This chain is Phosphoprotein (P/V), found in Measles virus (strain Edmonston) (MeV).